The sequence spans 408 residues: Probable medium-chain specific acyl-CoA dehydrogenase 2, mitochondrial (408 aa).

A mitochondrion-targeting transit peptide spans 1–5; it reads MLSRL. FAD-binding positions include 143 to 152 and 176 to 178; these read YCVTEPGAGS and WIT. Serine 152 contributes to the substrate binding site. Position 263 to 266 (263 to 266) interacts with substrate; that stretch reads DMTR. FAD-binding positions include 291–293, 301–302, and 355–359; these read RKA, HQ, and MLFRC. Glutamate 382 acts as the Proton acceptor in catalysis. Glycine 383 serves as a coordination point for substrate. 384 to 386 contributes to the FAD binding site; it reads TSQ. Arginine 394 provides a ligand contact to substrate.

This sequence belongs to the acyl-CoA dehydrogenase family. Homotetramer. The cofactor is FAD.

The protein resides in the mitochondrion matrix. It catalyses the reaction a medium-chain 2,3-saturated fatty acyl-CoA + oxidized [electron-transfer flavoprotein] + H(+) = a medium-chain (2E)-enoyl-CoA + reduced [electron-transfer flavoprotein]. Its pathway is lipid metabolism; mitochondrial fatty acid beta-oxidation. In terms of biological role, this enzyme is specific for acyl chain lengths of 4 to 16. The sequence is that of Probable medium-chain specific acyl-CoA dehydrogenase 2, mitochondrial from Caenorhabditis briggsae.